A 134-amino-acid chain; its full sequence is Complexin-1 (134 aa).

The tract at residues Met-1–Glu-112 is disordered. Residues Asp-15–Glu-81 are compositionally biased toward basic and acidic residues. Residues Asp-29–Lys-69 adopt a coiled-coil conformation. Residues Arg-48 to Tyr-70 form an interaction with the SNARE complex region.

This sequence belongs to the complexin/synaphin family. Binds to the SNARE core complex containing SNAP25, VAMP2 and STX1A.

The protein resides in the cytoplasm. It localises to the cytosol. Its subcellular location is the perikaryon. The protein localises to the presynapse. Functionally, positively regulates a late step in synaptic vesicle exocytosis. Organizes the SNAREs into a cross-linked zigzag topology that, when interposed between the vesicle and plasma membranes, is incompatible with fusion, thereby preventing SNAREs from releasing neurotransmitters until an action potential arrives at the synapse. Also involved in glucose-induced secretion of insulin by pancreatic beta-cells. The polypeptide is Complexin-1 (CPLX1) (Bos taurus (Bovine)).